Here is a 365-residue protein sequence, read N- to C-terminus: MSDTSILAYCRPGYENDTANELTSRYGEAGFYGYPVSKKNSGFAHYHLYDAAQLEQTVTQFAVHDSIFPRQLVAVFAAINDVEKEDRVGQVLDALKEVEKPFSIFGAVDVEYPDTEEGKTLAKFCRKFTVPLRQALRKAGWLTAKENLGKPKLHIFFASFEICYIGFTLPSHASRDHLGICRLKFPSDSPSRSTLKLEDALVNMLSNKQQSKVLRSGGRAVDLGACPGGWTYQLVKRGMYVEAIDNGLIADSLMSTGLVEHHAADGFTYRPQFGRVDLLVCDMIEQPDRVAKLMGDWLVKHWATHAIFNIKLPMKRRYETVVEAMTSLNSRLDALDDAFAVKVRHLYHDRDEVTVTIVRTSKDEV.

S-adenosyl-L-methionine-binding positions include Ser193, 226-229 (CPGG), Asp245, Asp265, and Asp282. The active-site Proton acceptor is Lys311.

This sequence belongs to the class I-like SAM-binding methyltransferase superfamily. RNA methyltransferase RlmE family. RlmM subfamily. As to quaternary structure, monomer.

It is found in the cytoplasm. The enzyme catalyses cytidine(2498) in 23S rRNA + S-adenosyl-L-methionine = 2'-O-methylcytidine(2498) in 23S rRNA + S-adenosyl-L-homocysteine + H(+). Its function is as follows. Catalyzes the 2'-O-methylation at nucleotide C2498 in 23S rRNA. This is Ribosomal RNA large subunit methyltransferase M from Alteromonas mediterranea (strain DSM 17117 / CIP 110805 / LMG 28347 / Deep ecotype).